A 99-amino-acid polypeptide reads, in one-letter code: NADH-quinone oxidoreductase subunit K (99 aa).

3 helical membrane-spanning segments follow: residues 3 to 23, 28 to 48, and 59 to 79; these read PDNY…GVLL, IVMF…FVTF, and VVAF…LAII.

Belongs to the complex I subunit 4L family. NDH-1 is composed of 14 different subunits. Subunits NuoA, H, J, K, L, M, N constitute the membrane sector of the complex.

The protein resides in the cell membrane. The catalysed reaction is a quinone + NADH + 5 H(+)(in) = a quinol + NAD(+) + 4 H(+)(out). Its function is as follows. NDH-1 shuttles electrons from NADH, via FMN and iron-sulfur (Fe-S) centers, to quinones in the respiratory chain. The immediate electron acceptor for the enzyme in this species is believed to be a menaquinone. Couples the redox reaction to proton translocation (for every two electrons transferred, four hydrogen ions are translocated across the cytoplasmic membrane), and thus conserves the redox energy in a proton gradient. The protein is NADH-quinone oxidoreductase subunit K of Mycolicibacterium vanbaalenii (strain DSM 7251 / JCM 13017 / BCRC 16820 / KCTC 9966 / NRRL B-24157 / PYR-1) (Mycobacterium vanbaalenii).